An 84-amino-acid polypeptide reads, in one-letter code: UPF0473 protein CKL_1327 (84 aa).

Belongs to the UPF0473 family.

This chain is UPF0473 protein CKL_1327, found in Clostridium kluyveri (strain ATCC 8527 / DSM 555 / NBRC 12016 / NCIMB 10680 / K1).